A 564-amino-acid chain; its full sequence is Aspyridones efflux protein (564 aa).

The span at 1–17 shows a compositional bias: low complexity; the sequence is MHPDQADTAAMQQQTTT. The interval 1 to 49 is disordered; it reads MHPDQADTAAMQQQTTTECSDRSRPEKAEEGHAREHTVTRTCSREPEQT. The span at 19-47 shows a compositional bias: basic and acidic residues; it reads CSDRSRPEKAEEGHAREHTVTRTCSREPE. The next 10 membrane-spanning stretches (helical) occupy residues 66 to 86, 127 to 147, 158 to 178, 185 to 205, 216 to 236, 260 to 280, 287 to 307, 335 to 355, 368 to 388, and 392 to 412; these read AICL…TAIP, WTFL…ATAP, IAGC…THSV, LFMA…PPLG, WCFW…VFLF, VGTL…QWGG, SGIV…FGIV, FALG…FQGV, LPML…VTII, and APFM…LLLF. Residue asparagine 415 is glycosylated (N-linked (GlcNAc...) asparagine). A run of 2 helical transmembrane segments spans residues 416-436 and 454-474; these read VTAA…GFGW and IATA…VSVA. A glycan (N-linked (GlcNAc...) asparagine) is linked at asparagine 524. Residues 528-548 form a helical membrane-spanning segment; the sequence is LSAFFVATIMAIMSLVGCTFV.

It belongs to the major facilitator superfamily. TCR/Tet family.

It localises to the cell membrane. Efflux pump that may be involved in the secretion of leporins. The sequence is that of Aspyridones efflux protein (TP) from Neocamarosporium betae (Beet black rot fungus).